The sequence spans 29 residues: Lambda-theraphotoxin-Ec2a (29 aa).

3 disulfide bridges follow: cysteine 2/cysteine 16, cysteine 9/cysteine 21, and cysteine 15/cysteine 25.

It belongs to the neurotoxin 30 (phrixotoxin) family. As to expression, expressed by the venom gland.

Its subcellular location is the secreted. Its function is as follows. Insect-selective neurotoxin that potently blocks insect calcium-activated potassium (BKCa) channels (Slo-type) in cockroach dorsal unpaired median (DUM) neurons (IC(50)=3.7 nM). This occurs in the absence of any shifts in the voltage dependence of activation. At high concentrations (330 nM), it partially inhibits cockroach delayed-rectifier potassium channels (Kv) currents. May interact with the turret and/or loop region of the external entrance to the channel and does not project deeply into the pore of the channel. In vivo, does not show toxicity in mice after intracerebroventricular injection of up to 25 pmol/g (1.8 ug/20 g mouse). The sequence is that of Lambda-theraphotoxin-Ec2a from Eucratoscelus constrictus (African red-rump baboon spider).